The chain runs to 299 residues: Lipoyl synthase (299 aa).

[4Fe-4S] cluster contacts are provided by C34, C39, C45, C60, C64, C67, and S273. The Radical SAM core domain maps to 46 to 262 (WNKKHATVMI…KYVAYSKGFL (217 aa)).

It belongs to the radical SAM superfamily. Lipoyl synthase family. [4Fe-4S] cluster serves as cofactor.

The protein resides in the cytoplasm. It catalyses the reaction [[Fe-S] cluster scaffold protein carrying a second [4Fe-4S](2+) cluster] + N(6)-octanoyl-L-lysyl-[protein] + 2 oxidized [2Fe-2S]-[ferredoxin] + 2 S-adenosyl-L-methionine + 4 H(+) = [[Fe-S] cluster scaffold protein] + N(6)-[(R)-dihydrolipoyl]-L-lysyl-[protein] + 4 Fe(3+) + 2 hydrogen sulfide + 2 5'-deoxyadenosine + 2 L-methionine + 2 reduced [2Fe-2S]-[ferredoxin]. The protein operates within protein modification; protein lipoylation via endogenous pathway; protein N(6)-(lipoyl)lysine from octanoyl-[acyl-carrier-protein]: step 2/2. In terms of biological role, catalyzes the radical-mediated insertion of two sulfur atoms into the C-6 and C-8 positions of the octanoyl moiety bound to the lipoyl domains of lipoate-dependent enzymes, thereby converting the octanoylated domains into lipoylated derivatives. The chain is Lipoyl synthase from Ehrlichia canis (strain Jake).